Consider the following 233-residue polypeptide: Riboflavin kinase (233 aa).

Residues 1 to 104 (MVRDIKTFKF…YKKIFDDEGT (104 aa)) form an H-T-H motif-like region. The segment at 105–233 (IKIKGEVFSG…GDFVEVEVIL (129 aa)) is riboflavin kinase. 114–119 (GVGEGR) provides a ligand contact to CDP. 2 residues coordinate Mg(2+): Thr-143 and Asn-145. FMN is bound by residues Thr-200 and Glu-208. Position 213 to 216 (213 to 216 (VKLR)) interacts with CDP.

The protein belongs to the archaeal riboflavin kinase family. Mg(2+) is required as a cofactor.

It carries out the reaction riboflavin + CTP = CDP + FMN + H(+). It functions in the pathway cofactor biosynthesis; FMN biosynthesis; FMN from riboflavin (CTP route): step 1/1. Functionally, catalyzes the CTP-dependent phosphorylation of riboflavin (vitamin B2) to form flavin mononucleotide (FMN). This is Riboflavin kinase (ribK) from Archaeoglobus fulgidus (strain ATCC 49558 / DSM 4304 / JCM 9628 / NBRC 100126 / VC-16).